Reading from the N-terminus, the 295-residue chain is Tyrosine recombinase XerD (295 aa).

Positions 1-85 constitute a Core-binding (CB) domain; it reads METIIEEYLK…TIRSFHQFAL (85 aa). Residues 106–289 form the Tyr recombinase domain; the sequence is KLPDVLDVEE…SKTQIRQMYN (184 aa). Catalysis depends on residues arginine 146, lysine 170, histidine 241, arginine 244, and histidine 267. Residue tyrosine 276 is the O-(3'-phospho-DNA)-tyrosine intermediate of the active site.

It belongs to the 'phage' integrase family. XerD subfamily. In terms of assembly, forms a cyclic heterotetrameric complex composed of two molecules of XerC and two molecules of XerD.

Its subcellular location is the cytoplasm. Its function is as follows. Site-specific tyrosine recombinase, which acts by catalyzing the cutting and rejoining of the recombining DNA molecules. The XerC-XerD complex is essential to convert dimers of the bacterial chromosome into monomers to permit their segregation at cell division. It also contributes to the segregational stability of plasmids. This chain is Tyrosine recombinase XerD, found in Staphylococcus haemolyticus (strain JCSC1435).